The chain runs to 342 residues: DNA repair protein RAD51 homolog 1 (342 aa).

Residues 1–24 (MTTMEQRRNQNAVQQQDDEETQHG) are disordered. Residues 51-80 (TVEGVAYTPRKDLLQIKGISDAKVDKIVEA) enclose the HhH domain. The region spanning 100 to 314 (QEIIQITSGS…LRKGRAEERI (215 aa)) is the FtsK domain. Residue 130–137 (GEFRSGKT) coordinates ATP.

It belongs to the RecA family. RAD51 subfamily. Self-associates and interacts with XRCC3. Binds to RAD54/CHR25. Interacts with BRCA2A and BRCA2B. Can form a tripartite complex with both BRCA2B and DSS1(I). In terms of tissue distribution, detected in various tissues. Higher expression in reproductive tissues than in vegetative tissues, with the highest expression level in young flower buds. At cellular level, is expressed at low levels in flower primordia, then at higher levels in young anthers and at highest levels in both females and males meiocytes. Not detected in gametophytes.

It is found in the nucleus. Functionally, binds to single and double-stranded DNA and exhibits DNA-dependent ATPase activity. Unwinds duplex DNA. Component of the meiotic recombination pathway. Seems to play a role in mediating chromosome homology search, chromosome pairing and synapsis at early stages and probably chromosome crossing-over at later stages in meiosis. Probably is involved in the repair of meiotic double strand breaks (DBSs) generated by AtSPO11-1 and in homologous recombination. Its function is dispensable for vegetative growth and root mitosis. This Arabidopsis thaliana (Mouse-ear cress) protein is DNA repair protein RAD51 homolog 1.